Reading from the N-terminus, the 1937-residue chain is Myosin-8 (1937 aa).

The region spanning aspartate 35 to proline 84 is the Myosin N-terminal SH3-like domain. Phosphothreonine is present on residues threonine 66 and threonine 71. Positions aspartate 88–aspartate 781 constitute a Myosin motor domain. The residue at position 132 (lysine 132) is an N6,N6,N6-trimethyllysine. Residue glycine 181–threonine 188 participates in ATP binding. Position 389 is a phosphotyrosine (tyrosine 389). At threonine 419 the chain carries Phosphothreonine. Tyrosine 424 carries the post-translational modification Phosphotyrosine. At serine 625 the chain carries Phosphoserine. The tract at residues leucine 658–glutamate 680 is actin-binding. Histidine 756 bears the Pros-methylhistidine mark. Positions lysine 760–glycine 774 are actin-binding. Positions aspartate 781–serine 813 constitute an IQ domain. A coiled-coil region spans residues leucine 842–glutamate 1937. Serine 1091 and serine 1095 each carry phosphoserine. Positions isoleucine 1125–glutamate 1171 are disordered. The span at alanine 1127–glutamate 1155 shows a compositional bias: basic and acidic residues. 2 positions are modified to phosphoserine: serine 1161 and serine 1236. At threonine 1254 the chain carries Phosphothreonine. Serine 1260 is subject to Phosphoserine. Threonine 1285 bears the Phosphothreonine mark. A phosphoserine mark is found at serine 1291, serine 1302, and serine 1305. Tyrosine 1463 bears the Phosphotyrosine mark. Threonine 1466 is modified (phosphothreonine). The residue at position 1491 (tyrosine 1491) is a Phosphotyrosine. Phosphoserine is present on serine 1494. Position 1500 is a phosphothreonine (threonine 1500). Serine 1513 carries the phosphoserine modification. The residue at position 1516 (threonine 1516) is a Phosphothreonine. A phosphoserine mark is found at serine 1553, serine 1573, serine 1602, serine 1713, and serine 1725. Threonine 1729 is modified (phosphothreonine). Serine 1738 is subject to Phosphoserine.

It belongs to the TRAFAC class myosin-kinesin ATPase superfamily. Myosin family. As to quaternary structure, muscle myosin is a hexameric protein that consists of 2 heavy chain subunits (MHC), 2 alkali light chain subunits (MLC) and 2 regulatory light chain subunits (MLC-2).

It is found in the cytoplasm. The protein resides in the myofibril. Muscle contraction. This Mus musculus (Mouse) protein is Myosin-8 (Myh8).